The sequence spans 322 residues: MDVLGFICAVFLGTVVLHAKPTVRKDRVLYQDPELLRQATNEDNNSFQYDHEVFLGKEESKTFDQLSPEESKDRLSKIVDRIDGDGNSYITTDELKAWIKRVQKRYVYENVVKVWADYDLNKDNKISWEEYKQATYGYYLSNPEEFDETTDQFSFKKMLPRDERRFKRADLDGDSAANREEFTSFLHPEEFEHMKDIVVLETLEDIDKNSDGHVDEDEYIADMFAHEDRGPEPEWVKTEREQFSDFRDLNKDGKMDLDEIRHWIMPQDYDHAQAEARHLVYESDKDKDQMLTKEEILDNWNMFVGSQATNYGEDLTRNHDEL.

An N-terminal signal peptide occupies residues methionine 1–alanine 19. Asparagine 44 carries an N-linked (GlcNAc...) asparagine glycan. EF-hand domains are found at residues glutamate 70–arginine 105, tyrosine 106–serine 141, lysine 157–glutamate 192, methionine 194–arginine 229, tryptophan 235–aspartate 270, and histidine 271–serine 306. The Ca(2+) site is built by aspartate 83, aspartate 85, asparagine 87, tyrosine 89, glutamate 94, aspartate 119, asparagine 121, aspartate 123, lysine 125, glutamate 130, aspartate 170, aspartate 172, aspartate 174, glutamate 181, aspartate 207, asparagine 209, aspartate 211, histidine 213, glutamate 218, aspartate 248, asparagine 250, aspartate 252, lysine 254, glutamate 259, aspartate 284, aspartate 286, aspartate 288, methionine 290, and glutamate 295. Positions histidine 319 to leucine 322 match the Prevents secretion from ER motif.

The protein belongs to the CREC family.

The protein localises to the endoplasmic reticulum lumen. Functionally, may regulate calcium-dependent activities in the endoplasmic reticulum lumen or post-ER compartment. The chain is Reticulocalbin-1 (rcn1) from Takifugu rubripes (Japanese pufferfish).